The chain runs to 75 residues: Cytochrome c oxidase subunit 6C (75 aa).

Over 1–13 (MSSGALTKPQMRG) the chain is Mitochondrial matrix. A helical transmembrane segment spans residues 14–54 (LLAKRLRFHIVGAFAVSLGVAAFYKFAVAEPRKKAYADFYR). The Mitochondrial intermembrane portion of the chain corresponds to 55-75 (NYDSMKDFEEMRKAGIFQSAK).

It belongs to the cytochrome c oxidase subunit 6c family. Component of the cytochrome c oxidase (complex IV, CIV), a multisubunit enzyme composed of 14 subunits. The complex is composed of a catalytic core of 3 subunits MT-CO1, MT-CO2 and MT-CO3, encoded in the mitochondrial DNA, and 11 supernumerary subunits COX4I, COX5A, COX5B, COX6A, COX6B, COX6C, COX7A, COX7B, COX7C, COX8 and NDUFA4, which are encoded in the nuclear genome. The complex exists as a monomer or a dimer and forms supercomplexes (SCs) in the inner mitochondrial membrane with NADH-ubiquinone oxidoreductase (complex I, CI) and ubiquinol-cytochrome c oxidoreductase (cytochrome b-c1 complex, complex III, CIII), resulting in different assemblies (supercomplex SCI(1)III(2)IV(1) and megacomplex MCI(2)III(2)IV(2)).

It is found in the mitochondrion inner membrane. It participates in energy metabolism; oxidative phosphorylation. Its function is as follows. Component of the cytochrome c oxidase, the last enzyme in the mitochondrial electron transport chain which drives oxidative phosphorylation. The respiratory chain contains 3 multisubunit complexes succinate dehydrogenase (complex II, CII), ubiquinol-cytochrome c oxidoreductase (cytochrome b-c1 complex, complex III, CIII) and cytochrome c oxidase (complex IV, CIV), that cooperate to transfer electrons derived from NADH and succinate to molecular oxygen, creating an electrochemical gradient over the inner membrane that drives transmembrane transport and the ATP synthase. Cytochrome c oxidase is the component of the respiratory chain that catalyzes the reduction of oxygen to water. Electrons originating from reduced cytochrome c in the intermembrane space (IMS) are transferred via the dinuclear copper A center (CU(A)) of subunit 2 and heme A of subunit 1 to the active site in subunit 1, a binuclear center (BNC) formed by heme A3 and copper B (CU(B)). The BNC reduces molecular oxygen to 2 water molecules using 4 electrons from cytochrome c in the IMS and 4 protons from the mitochondrial matrix. This is Cytochrome c oxidase subunit 6C (COX6C) from Carlito syrichta (Philippine tarsier).